Here is a 381-residue protein sequence, read N- to C-terminus: Succinyl-diaminopimelate desuccinylase (381 aa).

Histidine 68 is a binding site for Zn(2+). Aspartate 70 is a catalytic residue. Aspartate 101 serves as a coordination point for Zn(2+). Glutamate 135 functions as the Proton acceptor in the catalytic mechanism. Zn(2+) is bound by residues glutamate 136, glutamate 164, and histidine 350.

The protein belongs to the peptidase M20A family. DapE subfamily. As to quaternary structure, homodimer. It depends on Zn(2+) as a cofactor. Co(2+) is required as a cofactor.

The enzyme catalyses N-succinyl-(2S,6S)-2,6-diaminopimelate + H2O = (2S,6S)-2,6-diaminopimelate + succinate. The protein operates within amino-acid biosynthesis; L-lysine biosynthesis via DAP pathway; LL-2,6-diaminopimelate from (S)-tetrahydrodipicolinate (succinylase route): step 3/3. Catalyzes the hydrolysis of N-succinyl-L,L-diaminopimelic acid (SDAP), forming succinate and LL-2,6-diaminopimelate (DAP), an intermediate involved in the bacterial biosynthesis of lysine and meso-diaminopimelic acid, an essential component of bacterial cell walls. The chain is Succinyl-diaminopimelate desuccinylase from Neisseria meningitidis serogroup A / serotype 4A (strain DSM 15465 / Z2491).